Consider the following 259-residue polypeptide: ATP synthase subunit a 1 (259 aa).

A run of 5 helical transmembrane segments spans residues 30–50 (TLHV…LFFF), 90–110 (LIAP…AMDL), 135–155 (DLNA…FYSL), 209–229 (LIFI…SFPW), and 230–250 (AVFH…LTIV).

The protein belongs to the ATPase A chain family. As to quaternary structure, F-type ATPases have 2 components, CF(1) - the catalytic core - and CF(0) - the membrane proton channel. CF(1) has five subunits: alpha(3), beta(3), gamma(1), delta(1), epsilon(1). CF(0) has three main subunits: a(1), b(2) and c(9-12). The alpha and beta chains form an alternating ring which encloses part of the gamma chain. CF(1) is attached to CF(0) by a central stalk formed by the gamma and epsilon chains, while a peripheral stalk is formed by the delta and b chains.

The protein localises to the cell inner membrane. Functionally, key component of the proton channel; it plays a direct role in the translocation of protons across the membrane. The polypeptide is ATP synthase subunit a 1 (Methylococcus capsulatus (strain ATCC 33009 / NCIMB 11132 / Bath)).